The sequence spans 241 residues: Fatty acid metabolism regulator protein (241 aa).

Residues 11–79 enclose the HTH gntR-type domain; that stretch reads QSPAGLAEEY…HGKPTKVNNI (69 aa). The H-T-H motif DNA-binding region spans 39 to 58; that stretch reads ERELAEKIGVTRTTLREVLQ.

In terms of assembly, homodimer.

The protein resides in the cytoplasm. Its function is as follows. Multifunctional regulator of fatty acid metabolism. This chain is Fatty acid metabolism regulator protein, found in Pasteurella multocida (strain Pm70).